The chain runs to 667 residues: Kelch repeat-containing protein DDB_G0274267 (667 aa).

A coiled-coil region spans residues 58-98; the sequence is TDRKIELLQQLGEELEAHKQQIESNRDKSMMLIEQLNKKMN. The segment at 248 to 281 is disordered; that stretch reads SNNNDDTDDYDNNNNNNNDNKDDFDNCENNNNGD. Kelch repeat units lie at residues 319–366, 369–412, 434–480, 484–531, 534–582, and 607–654; these read CIYS…NFDG, HIYL…NGAN, NIYL…IYKE, SIYL…YDDQ, YIYV…SGGG, and IVHI…QFKN.

The protein is Kelch repeat-containing protein DDB_G0274267 of Dictyostelium discoideum (Social amoeba).